The primary structure comprises 354 residues: Protein RecA (354 aa).

G75–T82 is an ATP binding site.

It belongs to the RecA family.

It localises to the cytoplasm. In terms of biological role, can catalyze the hydrolysis of ATP in the presence of single-stranded DNA, the ATP-dependent uptake of single-stranded DNA by duplex DNA, and the ATP-dependent hybridization of homologous single-stranded DNAs. It interacts with LexA causing its activation and leading to its autocatalytic cleavage. The chain is Protein RecA from Cupriavidus taiwanensis (strain DSM 17343 / BCRC 17206 / CCUG 44338 / CIP 107171 / LMG 19424 / R1) (Ralstonia taiwanensis (strain LMG 19424)).